We begin with the raw amino-acid sequence, 1174 residues long: Male determiner protein Mdmd(Y) (1174 aa).

Basic and acidic residues predominate over residues 1-15; the sequence is MNATDAESRKPENKP. 3 disordered regions span residues 1 to 51, 79 to 109, and 136 to 259; these read MNAT…SGQR, RKDGSNEMLPKEDSINTNHNYTTDSDEHPVE, and KQLS…LRRS. Low complexity predominate over residues 16-35; it reads SSESSSSGSTSGSSDGEVSS. Polar residues predominate over residues 36 to 47; the sequence is KTYFKNNKSKVL. A compositionally biased stretch (basic and acidic residues) spans 79–92; it reads RKDGSNEMLPKEDS. Residues 138-153 are compositionally biased toward low complexity; that stretch reads LSAYRSRSRSTRLSYS. A compositionally biased stretch (basic residues) spans 167–180; it reads SRYKKSVLRNRRTS. A compositionally biased stretch (basic and acidic residues) spans 183 to 200; sequence HGRDSSTTKRSVSRDKDN. Over residues 201 to 223 the composition is skewed to basic residues; it reads RLRRRIGSSRSHTRSHSRFRRSE. The segment covering 235–259 has biased composition (basic and acidic residues); it reads RSQERRHERRRSMSSDYERIALRRS. The MIF4G domain maps to 348–531; the sequence is KKYIHGYINK…KVLFQVRRDG (184 aa). Over residues 597–608 the composition is skewed to low complexity; it reads DSDGSFGSGSNS. The interval 597 to 616 is disordered; sequence DSDGSFGSGSNSETALSDCD. The region spanning 641–757 is the MI domain; sequence ALRRTIYLTL…SWDVLDCIKL (117 aa). Residues 840-857 show a composition bias toward low complexity; the sequence is SAPSSSSSSSLSSELSAP. Disordered regions lie at residues 840–1045 and 1089–1135; these read SAPS…SRTK and KGGP…SREY. Composition is skewed to basic residues over residues 869–886 and 895–909; these read KKKHKGKNKKMTKKKNPS and IVGKNKIAAKNKTIK. Over residues 910–924 the composition is skewed to basic and acidic residues; the sequence is RRTDKDNSSSKDNFL. Residues 926 to 957 are compositionally biased toward low complexity; that stretch reads SESSSNESISLDSLSSELFAPSSYSSSESSND. A compositionally biased stretch (basic residues) spans 963–1001; sequence KHKGKNKKMTKKKNPSNKREKTKKKLSKNKKAPNKNTKK. A compositionally biased stretch (low complexity) spans 1010–1020; it reads SSESSISESKS. Over residues 1034-1045 the composition is skewed to basic residues; sequence RKKRVTSKSRTK. A compositionally biased stretch (basic and acidic residues) spans 1089–1118; it reads KGGPNCRKDNYGNRQNHEISQRHDSEIKRR. The segment covering 1119-1130 has biased composition (basic residues); that stretch reads REERKKRHHEKN.

This sequence belongs to the CWC22 family. Component of the spliceosome C complex.

It localises to the nucleus speckle. In terms of biological role, male determiner protein (M-factor) that controls male somatic sexual differentiation. Acts as a dominant factor that regulates the mRNA splicing of transformer (tra) and doublesex (dsx) transcripts and promotes expression of male splice forms of tra and dsx. Probably acts as a component of the spliceosome C complex required for mRNA splicing factor and exon-junction complex (EJC) assembly. Hinders eIF4AIII from non-specifically binding RNA and escorts it to the splicing machinery to promote EJC assembly on mature mRNAs. In Musca domestica (House fly), this protein is Male determiner protein Mdmd(Y).